The primary structure comprises 172 residues: Ribosome maturation factor RimM (172 aa).

The PRC barrel domain occupies 97 to 170; it reads ENEFYFHEII…KITIEVMEGL (74 aa).

The protein belongs to the RimM family. As to quaternary structure, binds ribosomal protein uS19.

Its subcellular location is the cytoplasm. In terms of biological role, an accessory protein needed during the final step in the assembly of 30S ribosomal subunit, possibly for assembly of the head region. Essential for efficient processing of 16S rRNA. May be needed both before and after RbfA during the maturation of 16S rRNA. It has affinity for free ribosomal 30S subunits but not for 70S ribosomes. The polypeptide is Ribosome maturation factor RimM (Listeria innocua serovar 6a (strain ATCC BAA-680 / CLIP 11262)).